The chain runs to 106 residues: L-rhamnose mutarotase (106 aa).

Tyr20 is a substrate binding site. Catalysis depends on His24, which acts as the Proton donor. Residues Tyr43 and 78 to 79 (WW) contribute to the substrate site.

This sequence belongs to the rhamnose mutarotase family. In terms of assembly, homodimer.

It is found in the cytoplasm. The catalysed reaction is alpha-L-rhamnose = beta-L-rhamnose. Its pathway is carbohydrate metabolism; L-rhamnose metabolism. Functionally, involved in the anomeric conversion of L-rhamnose. This is L-rhamnose mutarotase from Leptothrix cholodnii (strain ATCC 51168 / LMG 8142 / SP-6) (Leptothrix discophora (strain SP-6)).